The sequence spans 351 residues: Autoinducer 2 import system permease protein LsrC (351 aa).

The next 9 helical transmembrane spans lie at 14 to 34 (LLAI…YFSL), 39 to 59 (MIFS…LVML), 70 to 90 (ITGL…GLVA), 93 to 113 (LFAL…VTWL), 115 to 135 (IPAI…MLLL), 155 to 175 (ILFS…SMAW), 213 to 233 (MNGV…GFIP), 252 to 272 (GISL…AFLL), and 284 to 304 (LPAW…LVFD).

Belongs to the binding-protein-dependent transport system permease family. AraH/RbsC subfamily. In terms of assembly, the complex is composed of two ATP-binding proteins (LsrA), two transmembrane proteins (LsrC and LsrD) and a solute-binding protein (LsrB).

It localises to the cell inner membrane. Functionally, part of the ABC transporter complex LsrABCD involved in autoinducer 2 (AI-2) import. Probably responsible for the translocation of the substrate across the membrane. The polypeptide is Autoinducer 2 import system permease protein LsrC (lsrC) (Yersinia pseudotuberculosis serotype IB (strain PB1/+)).